Consider the following 491-residue polypeptide: Probable glycine dehydrogenase (decarboxylating) subunit 2 (491 aa).

N6-(pyridoxal phosphate)lysine is present on Lys273.

This sequence belongs to the GcvP family. C-terminal subunit subfamily. The glycine cleavage system is composed of four proteins: P, T, L and H. In this organism, the P 'protein' is a heterodimer of two subunits. Requires pyridoxal 5'-phosphate as cofactor.

It catalyses the reaction N(6)-[(R)-lipoyl]-L-lysyl-[glycine-cleavage complex H protein] + glycine + H(+) = N(6)-[(R)-S(8)-aminomethyldihydrolipoyl]-L-lysyl-[glycine-cleavage complex H protein] + CO2. Functionally, the glycine cleavage system catalyzes the degradation of glycine. The P protein binds the alpha-amino group of glycine through its pyridoxal phosphate cofactor; CO(2) is released and the remaining methylamine moiety is then transferred to the lipoamide cofactor of the H protein. This is Probable glycine dehydrogenase (decarboxylating) subunit 2 from Bacillus velezensis (strain DSM 23117 / BGSC 10A6 / LMG 26770 / FZB42) (Bacillus amyloliquefaciens subsp. plantarum).